The chain runs to 1021 residues: Transmembrane protein 132A (1021 aa).

A signal peptide spans 1 to 32; the sequence is MTERAAAAPRGPYGAWLCLLVALALEVVRVGS. Residues 33-848 are Extracellular-facing; the sequence is NQNTLDPIYL…VTDLELGMYA (816 aa). The tract at residues 207–226 is disordered; it reads PAGEGPGGCGPGTEEEPKEQ. The N-linked (GlcNAc...) asparagine glycan is linked to Asn-276. The interval 606–913 is binds to HSPA5/GRP78; it reads IEVRSPLSDS…QLDRCSSSSP (308 aa). Residues 666–1021 form a confers cellular localization similar to full-length form region; the sequence is LPAPKQEVAL…NYMERIRGSS (356 aa). The interval 793–835 is disordered; the sequence is AGDMGSHVGPGIRGKFERAEEEAGKEENEAKEEEEDEEEMVPA. A compositionally biased stretch (basic and acidic residues) spans 806 to 820; the sequence is GKFERAEEEAGKEEN. Positions 821–832 are enriched in acidic residues; sequence EAKEEEEDEEEM. Residues 849–869 traverse the membrane as a helical segment; the sequence is LLGIFCLAFLIFLVNGVVFVL. Residues 870–1021 are Cytoplasmic-facing; it reads RYQRKEPPDS…NYMERIRGSS (152 aa). Residues 903–955 form a disordered region; the sequence is RQLDRCSSSSPPKGEGGCPCESGAGGDTSTVAPSASESPAGSTSTLARKEAGG. Over residues 929–948 the composition is skewed to polar residues; the sequence is DTSTVAPSASESPAGSTSTL.

The protein belongs to the TMEM132 family. In terms of assembly, interacts with HSPA5/GRP78. Expressed in the brain in neuronal cells of the hypothalamus, thalamus, cerebral cortex, amygdala, and cerebellum.

The protein localises to the golgi apparatus membrane. It is found in the endoplasmic reticulum membrane. Functionally, may play a role in embryonic and postnatal development of the brain. Increased resistance to cell death induced by serum starvation in cultured cells. Regulates cAMP-induced GFAP gene expression via STAT3 phosphorylation. The chain is Transmembrane protein 132A (Tmem132a) from Rattus norvegicus (Rat).